The chain runs to 256 residues: MNNDVFPNKFKAALAAKQVQIGCWSALSNPISTEVLGLAGFDWLVLDGEHAPNDISTFIPQLMALKGSASAPVVRVPTNEPVIIKRLLDIGFYNFLIPFVETKEEAEQAVASTRYPPEGIRGVSVSHRANMFGTVADYFAQSNKNITILVQIESQQGVDNVDAIAATEGVDGIFVGPSDLAAALGHLGNASHPDVQKAIQHIFNRASAHGKPSGILAPVEADARRYLEWGATFVAVGSDLGIFRSATQKLADTFKK.

The active-site Proton acceptor is His-50. Residue Gln-151 coordinates substrate. Glu-153 contacts Mg(2+). Positions 178 and 179 each coordinate substrate. Asp-179 is a Mg(2+) binding site.

Belongs to the HpcH/HpaI aldolase family. KDGluc aldolase subfamily. As to quaternary structure, homohexamer; trimer of dimers. Mg(2+) is required as a cofactor.

The enzyme catalyses 5-dehydro-4-deoxy-D-glucarate = 2-hydroxy-3-oxopropanoate + pyruvate. The catalysed reaction is 2-dehydro-3-deoxy-D-glucarate = 2-hydroxy-3-oxopropanoate + pyruvate. It participates in carbohydrate acid metabolism; galactarate degradation; D-glycerate from galactarate: step 2/3. Catalyzes the reversible retro-aldol cleavage of both 5-keto-4-deoxy-D-glucarate and 2-keto-3-deoxy-D-glucarate to pyruvate and tartronic semialdehyde. This Escherichia coli O6:H1 (strain CFT073 / ATCC 700928 / UPEC) protein is 5-keto-4-deoxy-D-glucarate aldolase.